The following is a 450-amino-acid chain: Phosphoglucosamine mutase (450 aa).

The active-site Phosphoserine intermediate is serine 101. Residues serine 101, aspartate 242, aspartate 244, and aspartate 246 each contribute to the Mg(2+) site. Serine 101 carries the post-translational modification Phosphoserine.

The protein belongs to the phosphohexose mutase family. Mg(2+) serves as cofactor. In terms of processing, activated by phosphorylation.

It carries out the reaction alpha-D-glucosamine 1-phosphate = D-glucosamine 6-phosphate. In terms of biological role, catalyzes the conversion of glucosamine-6-phosphate to glucosamine-1-phosphate. The protein is Phosphoglucosamine mutase of Rhodopseudomonas palustris (strain ATCC BAA-98 / CGA009).